Reading from the N-terminus, the 281-residue chain is Diaminopimelate epimerase (281 aa).

Positions 13, 46, and 66 each coordinate substrate. Cys75 serves as the catalytic Proton donor. Substrate contacts are provided by residues 76-77 (GN), Asn160, Asn193, and 211-212 (ER). Catalysis depends on Cys220, which acts as the Proton acceptor. 221–222 (GT) contributes to the substrate binding site.

The protein belongs to the diaminopimelate epimerase family. In terms of assembly, homodimer.

The protein resides in the cytoplasm. It catalyses the reaction (2S,6S)-2,6-diaminopimelate = meso-2,6-diaminopimelate. The protein operates within amino-acid biosynthesis; L-lysine biosynthesis via DAP pathway; DL-2,6-diaminopimelate from LL-2,6-diaminopimelate: step 1/1. Its function is as follows. Catalyzes the stereoinversion of LL-2,6-diaminopimelate (L,L-DAP) to meso-diaminopimelate (meso-DAP), a precursor of L-lysine and an essential component of the bacterial peptidoglycan. The polypeptide is Diaminopimelate epimerase (Acinetobacter baumannii (strain ATCC 17978 / DSM 105126 / CIP 53.77 / LMG 1025 / NCDC KC755 / 5377)).